A 346-amino-acid chain; its full sequence is Oxidoreductase calI (346 aa).

The segment at 11-33 (VSTPQGRGDGRPTADQVLRDQDP) is disordered. Basic and acidic residues predominate over residues 18 to 32 (GDGRPTADQVLRDQD). NADP(+) contacts are provided by leucine 52, lysine 76, aspartate 100, and asparagine 128. The active-site Proton donor is the serine 181. The NADP(+) site is built by tyrosine 208, lysine 212, and isoleucine 241. Tyrosine 208 functions as the Proton acceptor in the catalytic mechanism. The active-site Lowers pKa of active site Tyr is the lysine 212.

It belongs to the short-chain dehydrogenases/reductases (SDR) family.

The protein operates within secondary metabolite biosynthesis. In terms of biological role, oxidoreductase; part of the gene cluster that mediates the biosynthesis of calbistrin A and related compounds. Calbistrin A is a secondary metabolite with an interesting structure that was recently found to have bioactivity against leukemia cells. It consists of two polyketides linked by an ester bond: a bicyclic decalin containing polyketide and a linear 12 carbon dioic acid structure. The polyketide synthase calA is probably responsible for forming the decalin moiety. Because calA lacks a designated enoylreductase (ER) domain, the required activity is provided by the trans-enoyl reductase calK. Following release from the PKS, calF then probably catalyzes the oxidation and the subsequent Diels Alder cycloisomerization that lead to the formation of the decalin moiety. The decalin polyketide backbone includes two C-methyl groups, at C7 and C11 in backbone, of which the C7 position is probably methylated by the methyltransferase domain of calA. A candidate for adding the methyl group at C11, if not done by CalA, is the cluster methyltransferase calH. Several additional tailoring enzymes within the cluster could be involved in the modification of the decalin polyketide product. Those include the 3 cytochrome P450 monooxygenases CalE, CalG and CalL, of which one might be responsible for the introduction of the extra hydroxyl group attached to the backbone of the decalin moiety, at position C9 in the backbone, that allows for attachment of the linear moiety. One tailoring enzyme activity that is expected to be involved in biosynthesis of calbistrin is an acyltransferase for connecting the two polyketide synthase products, and which could be performed by the cluster acyltransferase calJ. The enzyme responsible for the biosynthesis of the linear moiety, probably a second PKS, has not been identified yet. In Penicillium decumbens, this protein is Oxidoreductase calI.